The sequence spans 617 residues: Type VII secretion systems protein EssD (617 aa).

Residues 420-448 (QNHVTHGPKDSMVRSEGKHSISSHEMNSS) form a disordered region. Over residues 426 to 438 (GPKDSMVRSEGKH) the composition is skewed to basic and acidic residues.

It belongs to the EssD family. Interacts (via C-terminal) with EssG; this interaction blocks EssD activity. Interacts with EssE.

It localises to the secreted. The protein resides in the cell membrane. Functionally, component of the type VII secretion system (Ess). Plays a role in Ess secretion during infection. Required for the efficient secretion of EsxA. Required for abscess formation and staphylococcal persistence in host tissue. Possesses a toxic DNase activity that is modulated by EssG by forming a nuclease toxin-antitoxin pair. This nuclease toxin targets competitor bacteria. The chain is Type VII secretion systems protein EssD from Staphylococcus aureus (strain Newman).